A 501-amino-acid chain; its full sequence is Lysine--tRNA ligase (501 aa).

Mg(2+) is bound by residues Glu404 and Glu411.

The protein belongs to the class-II aminoacyl-tRNA synthetase family. Homodimer. It depends on Mg(2+) as a cofactor.

Its subcellular location is the cytoplasm. The catalysed reaction is tRNA(Lys) + L-lysine + ATP = L-lysyl-tRNA(Lys) + AMP + diphosphate. This Campylobacter jejuni subsp. jejuni serotype O:2 (strain ATCC 700819 / NCTC 11168) protein is Lysine--tRNA ligase (lysS).